We begin with the raw amino-acid sequence, 187 residues long: Meiotically up-regulated protein C1442.13c (187 aa).

Disordered stretches follow at residues 15 to 46 (QWEN…LSNE) and 119 to 145 (IQEG…PAIN). Positions 26 to 41 (PPRKPKIVQPKKKPSK) are enriched in basic residues. In terms of domain architecture, G-patch spans 145–187 (NNGKGKQLLEMMGWSRGKGLGSENQGMVDPVVAVVKNNKQGLH).

The protein resides in the nucleus. It is found in the cytoplasm. It localises to the cytoskeleton. The protein localises to the microtubule organizing center. Its subcellular location is the spindle pole body. Has a role in meiosis and sporulation. Required for meiotic chromosome segregation. This is Meiotically up-regulated protein C1442.13c from Schizosaccharomyces pombe (strain 972 / ATCC 24843) (Fission yeast).